We begin with the raw amino-acid sequence, 131 residues long: Fumarate reductase subunit C (131 aa).

Transmembrane regions (helical) follow at residues 30-50 (EGTCLPQLWFSLVVLFGVFAL), 58-78 (AGFVGFLSNPIVMLINIVTLI), and 109-129 (IVRGLWGLTIVVTVVILAVAL).

It belongs to the FrdC family. As to quaternary structure, part of an enzyme complex containing four subunits: a flavoprotein (FrdA), an iron-sulfur protein (FrdB), and two hydrophobic anchor proteins (FrdC and FrdD).

Its subcellular location is the cell inner membrane. In terms of biological role, two distinct, membrane-bound, FAD-containing enzymes are responsible for the catalysis of fumarate and succinate interconversion; fumarate reductase is used in anaerobic growth, and succinate dehydrogenase is used in aerobic growth. Anchors the catalytic components of the fumarate reductase complex to the cell inner membrane, binds quinones. The polypeptide is Fumarate reductase subunit C (Proteus mirabilis (strain HI4320)).